The sequence spans 414 residues: Histidine--tRNA ligase (414 aa).

It belongs to the class-II aminoacyl-tRNA synthetase family. In terms of assembly, homodimer.

The protein resides in the cytoplasm. It catalyses the reaction tRNA(His) + L-histidine + ATP = L-histidyl-tRNA(His) + AMP + diphosphate + H(+). The protein is Histidine--tRNA ligase of Rickettsia rickettsii (strain Iowa).